Reading from the N-terminus, the 256-residue chain is Type III pantothenate kinase (256 aa).

6–13 lines the ATP pocket; sequence DVGNSNIV. Residues tyrosine 100 and 107–110 contribute to the substrate site; that span reads GADR. The active-site Proton acceptor is aspartate 109. Aspartate 129 is a K(+) binding site. Position 132 (threonine 132) interacts with ATP. Threonine 184 is a substrate binding site.

It belongs to the type III pantothenate kinase family. In terms of assembly, homodimer. It depends on NH4(+) as a cofactor. K(+) is required as a cofactor.

The protein localises to the cytoplasm. The catalysed reaction is (R)-pantothenate + ATP = (R)-4'-phosphopantothenate + ADP + H(+). Its pathway is cofactor biosynthesis; coenzyme A biosynthesis; CoA from (R)-pantothenate: step 1/5. In terms of biological role, catalyzes the phosphorylation of pantothenate (Pan), the first step in CoA biosynthesis. The chain is Type III pantothenate kinase from Geotalea uraniireducens (strain Rf4) (Geobacter uraniireducens).